Reading from the N-terminus, the 494-residue chain is Ketol-acid reductoisomerase (NADP(+)) (494 aa).

Residues 14-208 (LDQLGRCRFM…GGHRAGCLES (195 aa)) enclose the KARI N-terminal Rossmann domain. Residues 45 to 48 (CGAQ), R68, R76, S78, and 108 to 110 (DKQ) contribute to the NADP(+) site. The active site involves H132. G158 serves as a coordination point for NADP(+). KARI C-terminal knotted domains are found at residues 209–344 (SFVA…NYPE) and 345–487 (TDVE…MTDM). Positions 217, 221, 389, and 393 each coordinate Mg(2+). Substrate is bound at residue S414.

It belongs to the ketol-acid reductoisomerase family. Requires Mg(2+) as cofactor.

The catalysed reaction is (2R)-2,3-dihydroxy-3-methylbutanoate + NADP(+) = (2S)-2-acetolactate + NADPH + H(+). It catalyses the reaction (2R,3R)-2,3-dihydroxy-3-methylpentanoate + NADP(+) = (S)-2-ethyl-2-hydroxy-3-oxobutanoate + NADPH + H(+). It participates in amino-acid biosynthesis; L-isoleucine biosynthesis; L-isoleucine from 2-oxobutanoate: step 2/4. Its pathway is amino-acid biosynthesis; L-valine biosynthesis; L-valine from pyruvate: step 2/4. Functionally, involved in the biosynthesis of branched-chain amino acids (BCAA). Catalyzes an alkyl-migration followed by a ketol-acid reduction of (S)-2-acetolactate (S2AL) to yield (R)-2,3-dihydroxy-isovalerate. In the isomerase reaction, S2AL is rearranged via a Mg-dependent methyl migration to produce 3-hydroxy-3-methyl-2-ketobutyrate (HMKB). In the reductase reaction, this 2-ketoacid undergoes a metal-dependent reduction by NADPH to yield (R)-2,3-dihydroxy-isovalerate. The polypeptide is Ketol-acid reductoisomerase (NADP(+)) (Vibrio parahaemolyticus serotype O3:K6 (strain RIMD 2210633)).